A 259-amino-acid chain; its full sequence is Indole-diterpene biosynthesis cluster protein S (259 aa).

5 helical membrane-spanning segments follow: residues 5–25, 64–84, 87–107, 134–154, and 221–241; these read EASGWGFSLLQILLVLAGMVW, WFALHLFLYTTQLVGLSAIIL, VYLIRMLGLSTALPLISLWVL, VLWFTGLAHVASFLVATAASF, and LGAGLLARLFFVSLIAGPAAG.

The protein belongs to the ltmS family.

It is found in the membrane. Part of the gene cluster that mediates the biosynthesis of paspalitrems, indole-diterpene (IDT) mycotoxins that are potent tremorgens in mammals. The geranylgeranyl diphosphate (GGPP) synthase idtG is proposed to catalyze the first step in IDT biosynthesis via catalysis of a series of iterative condensations of isopentenyl diphosphate (IPP) with dimethylallyl diphosphate (DMAPP), geranyl diphosphate (GPP), and farnesyl diphosphate (FPP), to form GGPP. Condensation of indole-3-glycerol phosphate with GGPP by the prenyltransferase idtC then forms 3-geranylgeranylindole (3-GGI). Epoxidation of the two terminal alkenes of the geranylgeranyl moiety by the FAD-dependent monooxygenase idtM, and cyclization by the terpene cyclase idtB then leads to the production of paspaline. The cytochrome P450 monooxygenase idtP then catalyzes oxidative elimination of the pendant methyl group at C-12 of paspaline and generates the C-10 ketone to yield 13-desoxypaxilline. The cytochrome P450 monooxygenase idtQ may catalyze the C-13 oxidation of 13-desoxypaxilline to afford paxilline. Considering that both paspalicine and paxilline were detected in C.paspali, idtQ also catalyzes the formation of paspalinine from 13-desoxypaxilline via paspalicine as an intermediate. Finally, the alpha-prenyltransferase idtF prenylates paspalinine at the C-20 or the C-21 positions to yield paspalitrems A and C, respectively. The hydroxylation of paspalitrem A at C-32 by a still unknown oxidase affords paspalitrem B. This Claviceps paspali (Rye ergot fungus) protein is Indole-diterpene biosynthesis cluster protein S.